The chain runs to 156 residues: Ribosomal RNA large subunit methyltransferase H (156 aa).

S-adenosyl-L-methionine is bound by residues Leu73, Gly104, and Leu123–Leu128.

It belongs to the RNA methyltransferase RlmH family. As to quaternary structure, homodimer.

It is found in the cytoplasm. It carries out the reaction pseudouridine(1915) in 23S rRNA + S-adenosyl-L-methionine = N(3)-methylpseudouridine(1915) in 23S rRNA + S-adenosyl-L-homocysteine + H(+). In terms of biological role, specifically methylates the pseudouridine at position 1915 (m3Psi1915) in 23S rRNA. The polypeptide is Ribosomal RNA large subunit methyltransferase H (Shewanella sp. (strain ANA-3)).